Here is a 126-residue protein sequence, read N- to C-terminus: Aspartate 1-decarboxylase (126 aa).

The active-site Schiff-base intermediate with substrate; via pyruvic acid is Ser-25. Ser-25 is modified (pyruvic acid (Ser)). Thr-57 provides a ligand contact to substrate. The active-site Proton donor is Tyr-58. 73–75 (GGA) lines the substrate pocket.

It belongs to the PanD family. In terms of assembly, heterooctamer of four alpha and four beta subunits. Pyruvate serves as cofactor. Post-translationally, is synthesized initially as an inactive proenzyme, which is activated by self-cleavage at a specific serine bond to produce a beta-subunit with a hydroxyl group at its C-terminus and an alpha-subunit with a pyruvoyl group at its N-terminus.

The protein resides in the cytoplasm. It carries out the reaction L-aspartate + H(+) = beta-alanine + CO2. Its pathway is cofactor biosynthesis; (R)-pantothenate biosynthesis; beta-alanine from L-aspartate: step 1/1. Functionally, catalyzes the pyruvoyl-dependent decarboxylation of aspartate to produce beta-alanine. This is Aspartate 1-decarboxylase from Xylella fastidiosa (strain M12).